The following is a 138-amino-acid chain: Gastrula zinc finger protein XlCGF44.2 (138 aa).

5 C2H2-type zinc fingers span residues 5–27 (FACT…KRIH), 32–54 (FVCA…QRLH), 60–82 (FTCT…QQIH), 88–110 (YVCS…MKTH), and 116–138 (FACS…QESH).

It belongs to the krueppel C2H2-type zinc-finger protein family.

The protein resides in the nucleus. May be involved in transcriptional regulation. The sequence is that of Gastrula zinc finger protein XlCGF44.2 from Xenopus laevis (African clawed frog).